The primary structure comprises 501 residues: Cytochrome P450 2J4 (501 aa).

The next 2 helical transmembrane spans lie at 12-32 (IWAA…LLLA) and 77-97 (NIFS…LPLI). Cys-447 serves as a coordination point for heme.

This sequence belongs to the cytochrome P450 family. Heme serves as cofactor. In terms of tissue distribution, expressed in small intestinal enterocytes (at protein level). In the intestinal crypt, expressed at higher levels in the mature villous cells than in undifferentiated crypt cells (at protein level). Expressed in liver, kidney, lung, and olfactory mucosa (at protein level).

The protein resides in the endoplasmic reticulum membrane. It localises to the microsome membrane. It carries out the reaction an organic molecule + reduced [NADPH--hemoprotein reductase] + O2 = an alcohol + oxidized [NADPH--hemoprotein reductase] + H2O + H(+). It catalyses the reaction (5Z,8Z,11Z,14Z)-eicosatetraenoate + reduced [NADPH--hemoprotein reductase] + O2 = 19-hydroxy-(5Z,8Z,11Z,14Z)-eicosatetraenoate + oxidized [NADPH--hemoprotein reductase] + H2O + H(+). The enzyme catalyses all-trans-retinal + reduced [NADPH--hemoprotein reductase] + O2 = all-trans-retinoate + oxidized [NADPH--hemoprotein reductase] + H2O + 2 H(+). The catalysed reaction is 9-cis-retinal + reduced [NADPH--hemoprotein reductase] + O2 = 9-cis-retinoate + oxidized [NADPH--hemoprotein reductase] + H2O + 2 H(+). It functions in the pathway lipid metabolism; arachidonate metabolism. Its pathway is cofactor metabolism; retinol metabolism. In terms of biological role, a cytochrome P450 monooxygenase that may play a major role in intestinal retinoid metabolism. Catalyzes the oxidative transformation of all-trans retinal and 9-cis-retinal to the corresponding active forms all-trans and 9-cis retinoic acids. Catalyzes the hydroxylation of carbon-hydrogen bonds. Hydroxylates arachidonic acid predominantly at the omega-1 position. Mechanistically, uses molecular oxygen inserting one oxygen atom into a substrate, and reducing the second into a water molecule, with two electrons provided by NADPH via cytochrome P450 reductase (CPR; NADPH--hemoprotein reductase). The chain is Cytochrome P450 2J4 from Rattus norvegicus (Rat).